Here is a 387-residue protein sequence, read N- to C-terminus: Probable purine permease 6 (387 aa).

The disordered stretch occupies residues 1–24 (MMELESETQELHLHVNGEPEGKFS). The segment covering 9 to 24 (QELHLHVNGEPEGKFS) has biased composition (basic and acidic residues). 10 helical membrane passes run 36-56 (LRVS…TLLG), 68-88 (WLET…YYYL), 106-126 (FLTL…HCIL), 129-149 (FGLL…QLAF), 162-182 (ITPF…LLVI), 201-221 (YVIG…VLSL), 238-258 (ILDM…VGLF), 283-303 (INIG…GLII), 309-329 (FSNV…VVFF), and 333-353 (MSGI…SYGY). Residues 362 to 387 (PEEDQELPQSKEEEEQKQVDTIHVQA) are disordered. Residues 370–381 (QSKEEEEQKQVD) are compositionally biased toward basic and acidic residues.

It belongs to the purine permeases (TC 2.A.7.14) family.

The protein resides in the membrane. The protein is Probable purine permease 6 (PUP6) of Arabidopsis thaliana (Mouse-ear cress).